A 323-amino-acid polypeptide reads, in one-letter code: MKRLDQVLAADGVNAELELVIKDVMVACKDIAYKLGQGELAGILGATEDENVQGETQKMLDVISNDLLKDILVANPYVRGVGSEEEDYTIAGNADGKYLVTFDPLDGSSNIDVNLSVGTIFSVLEAQDDQSGDNQEVFLQNGRKQVAAGYVLYGPSSLLVMTTGNGVNLFTLDTNIGEFVLTKEALQIPEDTAEFAINMSNQRFWEPEMKQYIDDCLLGEEGPLAKRYNMRWVASMVAEVHRILIRGGIFMYPYDNRDPSKAGKLRLMYEGNPMSMIVEQAGGASSTGRMDIMDVAPQGIHDRVPVVLGSKNEVAKVVAYHTK.

Mg(2+)-binding residues include Glu84, Asp103, Leu105, and Asp106. Residues 106 to 109 (DGSS), Asn198, and Lys264 contribute to the substrate site. Residue Glu270 participates in Mg(2+) binding.

Belongs to the FBPase class 1 family. In terms of assembly, homotetramer. The cofactor is Mg(2+).

It is found in the cytoplasm. The catalysed reaction is beta-D-fructose 1,6-bisphosphate + H2O = beta-D-fructose 6-phosphate + phosphate. The protein operates within carbohydrate biosynthesis; gluconeogenesis. The sequence is that of Fructose-1,6-bisphosphatase class 1 from Hydrogenovibrio crunogenus (strain DSM 25203 / XCL-2) (Thiomicrospira crunogena).